The sequence spans 96 residues: Co-chaperonin GroES (96 aa).

It belongs to the GroES chaperonin family. As to quaternary structure, heptamer of 7 subunits arranged in a ring. Interacts with the chaperonin GroEL.

It is found in the cytoplasm. Functionally, together with the chaperonin GroEL, plays an essential role in assisting protein folding. The GroEL-GroES system forms a nano-cage that allows encapsulation of the non-native substrate proteins and provides a physical environment optimized to promote and accelerate protein folding. GroES binds to the apical surface of the GroEL ring, thereby capping the opening of the GroEL channel. This chain is Co-chaperonin GroES, found in Legionella jeonii.